The following is a 192-amino-acid chain: Large ribosomal subunit protein uL10 (192 aa).

It belongs to the universal ribosomal protein uL10 family. As to quaternary structure, part of the ribosomal stalk of the 50S ribosomal subunit. The N-terminus interacts with L11 and the large rRNA to form the base of the stalk. The C-terminus forms an elongated spine to which L12 dimers bind in a sequential fashion forming a multimeric L10(L12)X complex.

Forms part of the ribosomal stalk, playing a central role in the interaction of the ribosome with GTP-bound translation factors. The sequence is that of Large ribosomal subunit protein uL10 from Gloeobacter violaceus (strain ATCC 29082 / PCC 7421).